Here is a 23-residue protein sequence, read N- to C-terminus: Phospholipase A1 verutoxin-1 (23 aa).

The protein belongs to the AB hydrolase superfamily. Lipase family. In terms of processing, contains six disulfide bonds. Expressed by the venom gland.

It localises to the secreted. The catalysed reaction is a 1,2-diacyl-sn-glycero-3-phosphocholine + H2O = a 2-acyl-sn-glycero-3-phosphocholine + a fatty acid + H(+). It carries out the reaction 1-(9Z-octadecenoyl)-2-hexadecanoyl-sn-glycero-3-phosphocholine + H2O = 2-hexadecanoyl-sn-glycero-3-phosphocholine + (9Z)-octadecenoate + H(+). The enzyme catalyses a 1-acyl-sn-glycero-3-phosphocholine + H2O = sn-glycerol 3-phosphocholine + a fatty acid + H(+). Its pathway is phospholipid metabolism. Its activity is regulated as follows. Activity is maximal in the presence of calcium. However, unlike phospholipases A2 whose catalytic activity is strictly calcium-dependent, this enzyme shows considerable catalytic activity on phosphatidylcholine emulsified in calcium free solution; the catalytic activity of VT-1 assayed in the absence of calcium ions is 18-20% of that assayed in solution containing calcium ions. In terms of biological role, catalyzes the hydrolysis of glycerophospholipids such as phosphatidylcholine (1,2-diacyl-sn-glycero-3-phosphocholine) and has a moderate activity to hydrolyze lysoglycerophospholipids such as lysophosphatidylcholine (1-acyl-sn-glycero-3-phosphocholine), but is unable to hydrolyze sphingomyelin. Liberates the fatty acid from the sn-1 position of 1,2-diacyl-sn-glycero-3-phosphocholine mainly, indicating phospholipase activity of the A1 type. In addition to acting as an allergen, it possesses a moderate hemolytic activity on red blood cells of mice (3% of hemolysis at 3.0 ug/ml). The polypeptide is Phospholipase A1 verutoxin-1 (Vespa velutina (Asian yellow-legged hornet)).